A 714-amino-acid polypeptide reads, in one-letter code: Putative glutamine--fructose-6-phosphate aminotransferase [isomerizing] (714 aa).

Cysteine 2 (nucleophile; for GATase activity) is an active-site residue. Residues 2-321 (CGIFGYCNFL…DNDIAHIYDG (320 aa)) enclose the Glutamine amidotransferase type-2 domain. The span at 266–280 (STTSTFNHGSSTETP) shows a compositional bias: polar residues. Residues 266–285 (STTSTFNHGSSTETPAENGL) are disordered. 2 consecutive SIS domains span residues 387–526 (WLTE…DLVS) and 559–704 (CDKK…VDLP).

It catalyses the reaction D-fructose 6-phosphate + L-glutamine = D-glucosamine 6-phosphate + L-glutamate. It participates in nucleotide-sugar biosynthesis; UDP-N-acetyl-alpha-D-glucosamine biosynthesis; alpha-D-glucosamine 6-phosphate from D-fructose 6-phosphate: step 1/1. Functionally, involved in amino sugar synthesis (formation of chitin, supplies the amino sugars of asparagine-linked oligosaccharides of glycoproteins). This Saccharomyces cerevisiae (strain YJM789) (Baker's yeast) protein is Putative glutamine--fructose-6-phosphate aminotransferase [isomerizing].